Consider the following 581-residue polypeptide: DNA primase (581 aa).

A CHC2-type zinc finger spans residues 40–64 (CPFHNEKTPSFTVNGEKQFYHCFGC). Residues 259–341 (NRLLVVEGYM…GRQLRFMFLP (83 aa)) enclose the Toprim domain. Mg(2+) is bound by residues Glu-265, Asp-309, and Asp-311.

The protein belongs to the DnaG primase family. Monomer. Interacts with DnaB. It depends on Zn(2+) as a cofactor. Mg(2+) is required as a cofactor.

It catalyses the reaction ssDNA + n NTP = ssDNA/pppN(pN)n-1 hybrid + (n-1) diphosphate.. Its function is as follows. RNA polymerase that catalyzes the synthesis of short RNA molecules used as primers for DNA polymerase during DNA replication. This chain is DNA primase, found in Escherichia coli O6:H1 (strain CFT073 / ATCC 700928 / UPEC).